Reading from the N-terminus, the 289-residue chain is Coiled-coil domain-containing protein 137 (289 aa).

Disordered stretches follow at residues 1–64, 149–184, and 204–225; these read MAGA…QEIP, EVQA…EKAA, and QPPE…GRRS. Over residues 7 to 20 the composition is skewed to low complexity; that stretch reads GAAVSRVQAGPGSP. Residue serine 19 is modified to Phosphoserine. Residues 155-197 are a coiled coil; sequence KEKSEQKKAKKAFQKRRLDKVRRKKEEKAADRLEQELLRDTVK. Basic residues predominate over residues 162–177; the sequence is KAKKAFQKRRLDKVRR. Serine 233 is subject to Phosphoserine. Positions 247 to 273 form a coiled coil; the sequence is RQRIVEEERERAVQAYRALKQRQQQLH. The disordered stretch occupies residues 265 to 289; the sequence is LKQRQQQLHGERPHLTSRKKPEPQL. The span at 273-289 shows a compositional bias: basic and acidic residues; sequence HGERPHLTSRKKPEPQL.

Its subcellular location is the chromosome. The protein is Coiled-coil domain-containing protein 137 (CCDC137) of Homo sapiens (Human).